We begin with the raw amino-acid sequence, 466 residues long: Ribosomal protein uS12 methylthiotransferase RimO (466 aa).

An MTTase N-terminal domain is found at 15–125; that stretch reads PKVGFVSLGC…VMEAVHAALP (111 aa). [4Fe-4S] cluster-binding residues include Cys-24, Cys-60, Cys-89, Cys-156, Cys-160, and Cys-163. Residues 142–380 enclose the Radical SAM core domain; sequence LTPRHYAYLK…AKQAEISALR (239 aa). The 69-residue stretch at 382–450 folds into the TRAM domain; that stretch reads EAKIGSVQQC…EHDLFGDALP (69 aa).

It belongs to the methylthiotransferase family. RimO subfamily. It depends on [4Fe-4S] cluster as a cofactor.

It is found in the cytoplasm. The enzyme catalyses L-aspartate(89)-[ribosomal protein uS12]-hydrogen + (sulfur carrier)-SH + AH2 + 2 S-adenosyl-L-methionine = 3-methylsulfanyl-L-aspartate(89)-[ribosomal protein uS12]-hydrogen + (sulfur carrier)-H + 5'-deoxyadenosine + L-methionine + A + S-adenosyl-L-homocysteine + 2 H(+). Catalyzes the methylthiolation of an aspartic acid residue of ribosomal protein uS12. This is Ribosomal protein uS12 methylthiotransferase RimO from Xanthomonas oryzae pv. oryzae (strain MAFF 311018).